Here is a 122-residue protein sequence, read N- to C-terminus: UPF0102 protein CTC_01256 (122 aa).

Belongs to the UPF0102 family.

This chain is UPF0102 protein CTC_01256, found in Clostridium tetani (strain Massachusetts / E88).